Reading from the N-terminus, the 168-residue chain is MRIQLLWLSFAVLSTILSTCDATSDKLDPQRVQPNQNGSGHNQSIRSALKTSHGKTIADDEERFISLSGMSEKIAKYYKAIVAKLSKYFRDYHERREIRKQRILNKSFAEMMAGQKSVEDIGRNQDASFMSSSFLWTPEAFKSILHKYALFLYKYGNGHLATVPVKTG.

A signal peptide spans 1-22 (MRIQLLWLSFAVLSTILSTCDA). The tract at residues 25–52 (DKLDPQRVQPNQNGSGHNQSIRSALKTS) is disordered. Residues 32–50 (VQPNQNGSGHNQSIRSALK) are compositionally biased toward polar residues. N-linked (GlcNAc...) asparagine glycosylation is found at Asn37 and Asn42. The RxLR-dEER motif lies at 46-63 (RSALKTSHGKTIADDEER). Residues 78 to 107 (YKAIVAKLSKYFRDYHERREIRKQRILNKS) form the IQ domain. N-linked (GlcNAc...) asparagine glycosylation is present at Asn105.

This sequence belongs to the RxLR effector family.

The protein localises to the secreted. It is found in the host Golgi apparatus. Its function is as follows. Secreted effector that suppresses pattern-triggered immunity (PTI) in plant host. The sequence is that of Secreted RxLR effector protein RXLR-C06 from Plasmopara halstedii (Downy mildew of sunflower).